The primary structure comprises 257 residues: Ribonuclease HII (257 aa).

Residues 72-257 (TYIAGIDEVG…FAPIKDMIQK (186 aa)) enclose the RNase H type-2 domain. Positions 78, 79, and 170 each coordinate a divalent metal cation.

The protein belongs to the RNase HII family. It depends on Mn(2+) as a cofactor. The cofactor is Mg(2+).

Its subcellular location is the cytoplasm. It catalyses the reaction Endonucleolytic cleavage to 5'-phosphomonoester.. Endonuclease that specifically degrades the RNA of RNA-DNA hybrids. The sequence is that of Ribonuclease HII from Bacillus cereus (strain AH820).